A 1296-amino-acid polypeptide reads, in one-letter code: Phosphoribosylformylglycinamidine synthase (1296 aa).

The disordered stretch occupies residues 304–323 (WPGAATGSGGEIRDEGATGR). Residues 306 to 317 (GAATGSGGEIRD) and Ala-677 each bind ATP. Residues Asp-678, Glu-717, Asn-721, and Asp-885 each coordinate Mg(2+). Residue Ser-887 coordinates ATP. Positions 1000–1013 (PDCADQEHQAKQDE) are enriched in basic and acidic residues. A disordered region spans residues 1000 to 1019 (PDCADQEHQAKQDESDPGLN). The region spanning 1043-1296 (VAVLREQGVN…MFRNARKQLG (254 aa)) is the Glutamine amidotransferase type-1 domain. Catalysis depends on Cys-1136, which acts as the Nucleophile. Active-site residues include His-1261 and Glu-1263.

This sequence in the N-terminal section; belongs to the FGAMS family. In terms of assembly, monomer.

It localises to the cytoplasm. The enzyme catalyses N(2)-formyl-N(1)-(5-phospho-beta-D-ribosyl)glycinamide + L-glutamine + ATP + H2O = 2-formamido-N(1)-(5-O-phospho-beta-D-ribosyl)acetamidine + L-glutamate + ADP + phosphate + H(+). It participates in purine metabolism; IMP biosynthesis via de novo pathway; 5-amino-1-(5-phospho-D-ribosyl)imidazole from N(2)-formyl-N(1)-(5-phospho-D-ribosyl)glycinamide: step 1/2. Phosphoribosylformylglycinamidine synthase involved in the purines biosynthetic pathway. Catalyzes the ATP-dependent conversion of formylglycinamide ribonucleotide (FGAR) and glutamine to yield formylglycinamidine ribonucleotide (FGAM) and glutamate. The polypeptide is Phosphoribosylformylglycinamidine synthase (Yersinia pestis bv. Antiqua (strain Antiqua)).